The sequence spans 302 residues: UDP-N-acetylenolpyruvoylglucosamine reductase (302 aa).

Residues 31–196 (KIGGPADVLA…LRAWISLERG (166 aa)) form the FAD-binding PCMH-type domain. Residue Arg-175 is part of the active site. Ser-225 functions as the Proton donor in the catalytic mechanism. Residue Glu-295 is part of the active site.

This sequence belongs to the MurB family. FAD serves as cofactor.

It is found in the cytoplasm. The catalysed reaction is UDP-N-acetyl-alpha-D-muramate + NADP(+) = UDP-N-acetyl-3-O-(1-carboxyvinyl)-alpha-D-glucosamine + NADPH + H(+). Its pathway is cell wall biogenesis; peptidoglycan biosynthesis. In terms of biological role, cell wall formation. This chain is UDP-N-acetylenolpyruvoylglucosamine reductase, found in Caldanaerobacter subterraneus subsp. tengcongensis (strain DSM 15242 / JCM 11007 / NBRC 100824 / MB4) (Thermoanaerobacter tengcongensis).